The chain runs to 130 residues: Translation initiation factor 5A (130 aa).

Lysine 36 bears the Hypusine mark.

Belongs to the eIF-5A family.

It localises to the cytoplasm. Its function is as follows. Functions by promoting the formation of the first peptide bond. This chain is Translation initiation factor 5A (eif5a), found in Methanothermobacter thermautotrophicus (strain ATCC 29096 / DSM 1053 / JCM 10044 / NBRC 100330 / Delta H) (Methanobacterium thermoautotrophicum).